The sequence spans 224 residues: Voltage-dependent calcium channel gamma-1 subunit (224 aa).

Over 1–10 (MSQTKALKVR) the chain is Cytoplasmic. Residues 11–29 (VTLFCILVGIVLALVAVVT) form a helical membrane-spanning segment. At 30–110 (DHWAVLSPHV…TQKEYSISAA (81 aa)) the chain is on the extracellular side. N43 and N81 each carry an N-linked (GlcNAc...) asparagine glycan. An intrachain disulfide couples C57 to C82. Residues 111 to 131 (AIAIFSLGFIILGTICGLLSF) traverse the membrane as a helical segment. The Cytoplasmic segment spans residues 132 to 136 (RKKRD). The helical transmembrane segment at 137–157 (YLLRPASMFYAFAGLCIFVSV) threads the bilayer. The Extracellular segment spans residues 158–181 (EVMRQSVKRMIDSEDTVWIDYYYG). The helical transmembrane segment at 182–206 (WSFACACAAFILLFLGGIALLLFSL) threads the bilayer. Over 207–224 (PRMPQYPWESCMDAEPEH) the chain is Cytoplasmic.

It belongs to the PMP-22/EMP/MP20 family. CACNG subfamily. In terms of assembly, component of a calcium channel complex consisting of a pore-forming alpha subunit (CACNA1S) and the ancillary subunits CACNB1 or CACNB2, CACNG1 and CACNA2D1. The channel complex contains alpha, beta, gamma and delta subunits in a 1:1:1:1 ratio, i.e. it contains either CACNB1 or CACNB2. Post-translationally, N-glycosylated.

It localises to the cell membrane. It is found in the sarcolemma. Functionally, regulatory subunit of the voltage-gated calcium channel that gives rise to L-type calcium currents in skeletal muscle. Regulates channel inactivation kinetics. The chain is Voltage-dependent calcium channel gamma-1 subunit (CACNG1) from Sus scrofa (Pig).